Consider the following 612-residue polypeptide: Calcium-dependent protein kinase 27 (612 aa).

Gly-2 is lipidated: N-myristoyl glycine. The interval 23–132 is disordered; the sequence is PRHAAPSSPS…AHIKRISSAG (110 aa). Residues 28–50 are compositionally biased toward low complexity; it reads PSSPSQPTTTSRSIPVVLPSAPS. Residues 51–100 show a composition bias toward pro residues; that stretch reads SKPPPPTQTAPPVPVVISEPPPPQPQPEPQPAAPSQPPPPQEQPSPPPPA. The span at 117-127 shows a compositional bias: basic residues; it reads SRAKKPAHIKR. Residues 150–408 form the Protein kinase domain; it reads YSLGRKLGQG…AHEVLCHPWL (259 aa). Residues 156-164 and Lys-179 contribute to the ATP site; that span reads LGQGQFGTT. The active-site Proton acceptor is Asp-274. Positions 414-444 are autoinhibitory domain; that stretch reads APDKPLDSAVLSRLRQFSAMNKLKKMALRVI. EF-hand domains lie at 451-486, 487-522, 523-558, and 561-592; these read EEIA…VGAN, MKES…LNKV, ERED…FGIE, and RLED…TTTG. Asp-464, Asp-466, Ser-468, Gln-470, Glu-475, Asp-500, Asp-502, Ser-504, Thr-506, Glu-511, Asp-536, Asp-538, Ser-540, Tyr-542, Glu-547, Asp-570, Asp-572, Asp-574, Arg-576, and Glu-581 together coordinate Ca(2+).

The protein belongs to the protein kinase superfamily. Ser/Thr protein kinase family. CDPK subfamily.

Its subcellular location is the membrane. It catalyses the reaction L-seryl-[protein] + ATP = O-phospho-L-seryl-[protein] + ADP + H(+). The catalysed reaction is L-threonyl-[protein] + ATP = O-phospho-L-threonyl-[protein] + ADP + H(+). With respect to regulation, activated by calcium. Autophosphorylation may play an important role in the regulation of the kinase activity. In terms of biological role, may play a role in signal transduction pathways that involve calcium as a second messenger. The polypeptide is Calcium-dependent protein kinase 27 (Oryza sativa subsp. japonica (Rice)).